A 323-amino-acid polypeptide reads, in one-letter code: Tyrosine--tRNA ligase (323 aa).

Y36 is a binding site for L-tyrosine. Positions 41-49 match the 'HIGH' region motif; the sequence is PSGEIHLGH. Positions 158, 162, 165, and 180 each coordinate L-tyrosine. The 'KMSKS' region signature appears at 214–218; sequence KMSSS. Position 217 (S217) interacts with ATP.

The protein belongs to the class-I aminoacyl-tRNA synthetase family. TyrS type 3 subfamily. In terms of assembly, homodimer.

Its subcellular location is the cytoplasm. It carries out the reaction tRNA(Tyr) + L-tyrosine + ATP = L-tyrosyl-tRNA(Tyr) + AMP + diphosphate + H(+). In terms of biological role, catalyzes the attachment of tyrosine to tRNA(Tyr) in a two-step reaction: tyrosine is first activated by ATP to form Tyr-AMP and then transferred to the acceptor end of tRNA(Tyr). The polypeptide is Tyrosine--tRNA ligase (Archaeoglobus fulgidus (strain ATCC 49558 / DSM 4304 / JCM 9628 / NBRC 100126 / VC-16)).